The primary structure comprises 115 residues: UPF0102 protein NMB2089 (115 aa).

It belongs to the UPF0102 family.

The protein is UPF0102 protein NMB2089 of Neisseria meningitidis serogroup B (strain ATCC BAA-335 / MC58).